Reading from the N-terminus, the 462-residue chain is A-type ATP synthase subunit B (462 aa).

This sequence belongs to the ATPase alpha/beta chains family. As to quaternary structure, has multiple subunits with at least A(3), B(3), C, D, E, F, H, I and proteolipid K(x).

The protein localises to the cell membrane. In terms of biological role, component of the A-type ATP synthase that produces ATP from ADP in the presence of a proton gradient across the membrane. The B chain is a regulatory subunit. The polypeptide is A-type ATP synthase subunit B (Pyrococcus abyssi (strain GE5 / Orsay)).